A 601-amino-acid polypeptide reads, in one-letter code: Glutathione-regulated potassium-efflux system protein KefB (601 aa).

13 helical membrane passes run 4–24, 29–49, 55–75, 87–107, 115–135, 152–172, 177–197, 207–227, 230–250, 268–288, 291–311, 324–344, and 356–376; these read SDFL…VPLA, IGAV…GLGF, EILH…GLEL, IFGV…GLLM, AAVV…LQLM, VLLF…LLAG, HFDW…LIGG, FIAA…LVLG, LFMD…GVLL, GLLL…GVLY, LLWV…VLYL, MQFA…FSSA, and ALLL…MKLV. The RCK N-terminal domain occupies 400–519; that stretch reads KPQVIVVGFG…AGVTQFSRET (120 aa).

It belongs to the monovalent cation:proton antiporter 2 (CPA2) transporter (TC 2.A.37) family. KefB subfamily. In terms of assembly, interacts with the regulatory subunit KefG.

Its subcellular location is the cell inner membrane. In terms of biological role, pore-forming subunit of a potassium efflux system that confers protection against electrophiles. Catalyzes K(+)/H(+) antiport. The chain is Glutathione-regulated potassium-efflux system protein KefB from Escherichia coli O127:H6 (strain E2348/69 / EPEC).